Reading from the N-terminus, the 631-residue chain is Golgin subfamily A member 8R (631 aa).

Residues 1–72 are disordered; sequence MAEETQHNKL…REGPTSSATL (72 aa). Residues 38-50 are compositionally biased toward polar residues; the sequence is TNGSIPETATSGG. 3 coiled-coil regions span residues 85–149, 209–247, and 303–419; these read VLDS…NTDL, ELEQ…HIEG, and SEVE…LSLM. Disordered stretches follow at residues 422–451, 502–523, and 551–610; these read PGEG…DPES, AKDA…DEGE, and NSAD…QEHP. The segment covering 507 to 519 has biased composition (gly residues); that stretch reads LGGGHHQAGAQGG. A compositionally biased stretch (basic and acidic residues) spans 568–577; sequence AADKHGDLRE.

The protein belongs to the GOLGA8 family.

This chain is Golgin subfamily A member 8R, found in Homo sapiens (Human).